A 269-amino-acid polypeptide reads, in one-letter code: Putative imidazole glycerol phosphate synthase subunit hisF2 (269 aa).

D133 is a catalytic residue.

It belongs to the HisA/HisF family. Heterodimer of HisH and HisF.

Its subcellular location is the cytoplasm. The enzyme catalyses 5-[(5-phospho-1-deoxy-D-ribulos-1-ylimino)methylamino]-1-(5-phospho-beta-D-ribosyl)imidazole-4-carboxamide + L-glutamine = D-erythro-1-(imidazol-4-yl)glycerol 3-phosphate + 5-amino-1-(5-phospho-beta-D-ribosyl)imidazole-4-carboxamide + L-glutamate + H(+). It functions in the pathway amino-acid biosynthesis; L-histidine biosynthesis; L-histidine from 5-phospho-alpha-D-ribose 1-diphosphate: step 5/9. Its function is as follows. IGPS catalyzes the conversion of PRFAR and glutamine to IGP, AICAR and glutamate. The HisF subunit catalyzes the cyclization activity that produces IGP and AICAR from PRFAR using the ammonia provided by the HisH subunit. In Parasynechococcus marenigrum (strain WH8102), this protein is Putative imidazole glycerol phosphate synthase subunit hisF2 (hisF2).